The following is a 393-amino-acid chain: Chalcone synthase LF2 (393 aa).

Cysteine 164 is a catalytic residue.

This sequence belongs to the thiolase-like superfamily. Chalcone/stilbene synthases family.

The catalysed reaction is (E)-4-coumaroyl-CoA + 3 malonyl-CoA + 3 H(+) = 2',4,4',6'-tetrahydroxychalcone + 3 CO2 + 4 CoA. Its pathway is secondary metabolite biosynthesis; flavonoid biosynthesis. In terms of biological role, the primary product of this enzyme is 4,2',4',6'-tetrahydroxychalcone (also termed naringenin-chalcone or chalcone) which can under specific conditions spontaneously isomerize into naringenin. In Ipomoea batatas (Sweet potato), this protein is Chalcone synthase LF2 (CHS-LF2).